A 187-amino-acid polypeptide reads, in one-letter code: Troponin I, slow skeletal muscle (187 aa).

Pro2 is modified (N-acetylproline). The tract at residues 2–48 (PEVERKSKITASRKLMLKSLMLAKAKECWEQEHEEREAEKVRYLSER) is involved in binding TNC. The residue at position 58 (Ser58) is a Phosphoserine. The involved in binding TNC and actin stretch occupies residues 97 to 118 (LKLKVLDLRGKFKRPPLRRVRV).

This sequence belongs to the troponin I family. As to quaternary structure, binds to actin and tropomyosin.

Troponin I is the inhibitory subunit of troponin, the thin filament regulatory complex which confers calcium-sensitivity to striated muscle actomyosin ATPase activity. In Mus musculus (Mouse), this protein is Troponin I, slow skeletal muscle (Tnni1).